Consider the following 125-residue polypeptide: Large ribosomal subunit protein bL12 (125 aa).

It belongs to the bacterial ribosomal protein bL12 family. As to quaternary structure, homodimer. Part of the ribosomal stalk of the 50S ribosomal subunit. Forms a multimeric L10(L12)X complex, where L10 forms an elongated spine to which 2 to 4 L12 dimers bind in a sequential fashion. Binds GTP-bound translation factors.

Its function is as follows. Forms part of the ribosomal stalk which helps the ribosome interact with GTP-bound translation factors. Is thus essential for accurate translation. The sequence is that of Large ribosomal subunit protein bL12 from Francisella tularensis subsp. tularensis (strain SCHU S4 / Schu 4).